The chain runs to 256 residues: Acetyl-coenzyme A carboxylase carboxyl transferase subunit alpha (256 aa).

One can recognise a CoA carboxyltransferase C-terminal domain in the interval 1 to 236 (MTDVSRVLKE…KANLIEQITS (236 aa)).

The protein belongs to the AccA family. In terms of assembly, acetyl-CoA carboxylase is a heterohexamer composed of biotin carboxyl carrier protein (AccB), biotin carboxylase (AccC) and two subunits each of ACCase subunit alpha (AccA) and ACCase subunit beta (AccD).

Its subcellular location is the cytoplasm. The enzyme catalyses N(6)-carboxybiotinyl-L-lysyl-[protein] + acetyl-CoA = N(6)-biotinyl-L-lysyl-[protein] + malonyl-CoA. Its pathway is lipid metabolism; malonyl-CoA biosynthesis; malonyl-CoA from acetyl-CoA: step 1/1. Functionally, component of the acetyl coenzyme A carboxylase (ACC) complex. First, biotin carboxylase catalyzes the carboxylation of biotin on its carrier protein (BCCP) and then the CO(2) group is transferred by the carboxyltransferase to acetyl-CoA to form malonyl-CoA. This Streptococcus pyogenes serotype M12 (strain MGAS2096) protein is Acetyl-coenzyme A carboxylase carboxyl transferase subunit alpha.